A 63-amino-acid chain; its full sequence is Beta-insect depressant toxin Im-3 (63 aa).

Residues 1 to 63 (KEGYGVGKDG…KVWESSTNTC (63 aa)) enclose the LCN-type CS-alpha/beta domain. Cystine bridges form between Cys11–Cys63, Cys15–Cys37, Cys22–Cys44, and Cys26–Cys46.

Belongs to the long (4 C-C) scorpion toxin superfamily. Sodium channel inhibitor family. Beta subfamily. In terms of tissue distribution, expressed by the venom gland.

It localises to the secreted. Functionally, beta toxins bind voltage-independently at site-4 of sodium channels (Nav) and shift the voltage of activation toward more negative potentials thereby affecting sodium channel activation and promoting spontaneous and repetitive firing. Induces paralysis in cricket A.domestica but does not induce death. In Isometrus maculatus (Lesser brown scorpion), this protein is Beta-insect depressant toxin Im-3.